We begin with the raw amino-acid sequence, 408 residues long: tRNA-specific 2-thiouridylase MnmA (408 aa).

ATP is bound by residues 27-34 and Leu-53; that span reads AMSGGVDS. Cys-121 functions as the Nucleophile in the catalytic mechanism. Cysteines 121 and 222 form a disulfide. Gly-145 lines the ATP pocket. The interaction with tRNA stretch occupies residues 172–174; that stretch reads RDQ. Cys-222 functions as the Cysteine persulfide intermediate in the catalytic mechanism.

The protein belongs to the MnmA/TRMU family.

The protein localises to the cytoplasm. It catalyses the reaction S-sulfanyl-L-cysteinyl-[protein] + uridine(34) in tRNA + AH2 + ATP = 2-thiouridine(34) in tRNA + L-cysteinyl-[protein] + A + AMP + diphosphate + H(+). Functionally, catalyzes the 2-thiolation of uridine at the wobble position (U34) of tRNA, leading to the formation of s(2)U34. The protein is tRNA-specific 2-thiouridylase MnmA of Rhizobium etli (strain CIAT 652).